The sequence spans 159 residues: Putative 4-hydroxy-4-methyl-2-oxoglutarate aldolase (159 aa).

Substrate contacts are provided by residues 74–77 (GDNL) and arginine 96. Aspartate 97 lines the a divalent metal cation pocket.

This sequence belongs to the class II aldolase/RraA-like family. As to quaternary structure, homotrimer. Requires a divalent metal cation as cofactor.

It carries out the reaction 4-hydroxy-4-methyl-2-oxoglutarate = 2 pyruvate. The enzyme catalyses oxaloacetate + H(+) = pyruvate + CO2. Its function is as follows. Catalyzes the aldol cleavage of 4-hydroxy-4-methyl-2-oxoglutarate (HMG) into 2 molecules of pyruvate. Also contains a secondary oxaloacetate (OAA) decarboxylase activity due to the common pyruvate enolate transition state formed following C-C bond cleavage in the retro-aldol and decarboxylation reactions. The polypeptide is Putative 4-hydroxy-4-methyl-2-oxoglutarate aldolase (Bacillus cereus (strain ZK / E33L)).